The following is a 401-amino-acid chain: 8-amino-7-oxononanoate synthase (401 aa).

Arg-24 is a binding site for substrate. 111-112 (GF) contributes to the pyridoxal 5'-phosphate binding site. Position 137 (His-137) interacts with substrate. Pyridoxal 5'-phosphate is bound by residues Ser-183, His-211, and Thr-240. Lys-243 carries the N6-(pyridoxal phosphate)lysine modification. Thr-357 is a substrate binding site.

Belongs to the class-II pyridoxal-phosphate-dependent aminotransferase family. BioF subfamily. As to quaternary structure, homodimer. Pyridoxal 5'-phosphate serves as cofactor.

The enzyme catalyses 6-carboxyhexanoyl-[ACP] + L-alanine + H(+) = (8S)-8-amino-7-oxononanoate + holo-[ACP] + CO2. The protein operates within cofactor biosynthesis; biotin biosynthesis. Functionally, catalyzes the decarboxylative condensation of pimeloyl-[acyl-carrier protein] and L-alanine to produce 8-amino-7-oxononanoate (AON), [acyl-carrier protein], and carbon dioxide. The protein is 8-amino-7-oxononanoate synthase of Xanthomonas axonopodis pv. citri (strain 306).